The sequence spans 340 residues: Beta-D-galactofuranosidase xynD (340 aa).

A signal peptide spans 1 to 24 (MKHHNYYPSTCLSILPFLLPLTMS). The active-site Proton acceptor is the aspartate 51. Asparagine 96 and asparagine 165 each carry an N-linked (GlcNAc...) asparagine glycan. Glutamate 222 serves as the catalytic Proton donor. Asparagine 302 and asparagine 328 each carry an N-linked (GlcNAc...) asparagine glycan.

This sequence belongs to the glycosyl hydrolase 43 family.

It is found in the secreted. Its pathway is glycan degradation. In terms of biological role, glycoside hydrolase family 43 beta-D-galactofuranosidase involved in the degradation of beta-galactofuranoside (Galf)-containing glycans such as galactomannan or O-glycans. Is not active on beta-1,5- or beta-1,6-linked beta-D-galactofuranose (Galf) residues. The polypeptide is Beta-D-galactofuranosidase xynD (Aspergillus niger (strain ATCC MYA-4892 / CBS 513.88 / FGSC A1513)).